The chain runs to 124 residues: Large ribosomal subunit protein mL51 (124 aa).

A mitochondrion-targeting transit peptide spans 1–31 (MSVFGGLWRSAVNLCQSSRLFSTGSCARIRM).

The protein belongs to the mitochondrion-specific ribosomal protein mL51 family. Component of the mitochondrial ribosome large subunit (39S) which comprises a 16S rRNA and about 50 distinct proteins.

It localises to the mitochondrion. The sequence is that of Large ribosomal subunit protein mL51 (mrpl51) from Danio rerio (Zebrafish).